Consider the following 282-residue polypeptide: NADPH-dependent 7-cyano-7-deazaguanine reductase (282 aa).

88–90 (IES) is a binding site for substrate. 90 to 91 (SK) lines the NADPH pocket. Cys-189 (thioimide intermediate) is an active-site residue. The active-site Proton donor is Asp-196. 228 to 229 (HE) contributes to the substrate binding site. 257-258 (RG) contacts NADPH.

It belongs to the GTP cyclohydrolase I family. QueF type 2 subfamily. As to quaternary structure, homodimer.

Its subcellular location is the cytoplasm. It catalyses the reaction 7-aminomethyl-7-carbaguanine + 2 NADP(+) = 7-cyano-7-deazaguanine + 2 NADPH + 3 H(+). The protein operates within tRNA modification; tRNA-queuosine biosynthesis. Its function is as follows. Catalyzes the NADPH-dependent reduction of 7-cyano-7-deazaguanine (preQ0) to 7-aminomethyl-7-deazaguanine (preQ1). The protein is NADPH-dependent 7-cyano-7-deazaguanine reductase of Photorhabdus laumondii subsp. laumondii (strain DSM 15139 / CIP 105565 / TT01) (Photorhabdus luminescens subsp. laumondii).